The primary structure comprises 663 residues: CXXC-type zinc finger protein 1 (663 aa).

Residues 60-110 (QAYCICRSSDCSRFMIGCDGCEEWYHGDCIGITEKEAKHIKQYYCRRCKKE) form a PHD-type zinc finger. Residues 134–161 (TSLNAPGVGPSGAAPAAAPVASATTSQQ) are compositionally biased toward low complexity. The segment at 134–183 (TSLNAPGVGPSGAAPAAAPVASATTSQQAPPPTTAAAKRKNSSAREPKMG) is disordered. The CXXC-type zinc finger occupies 175 to 219 (SSAREPKMGKRCGTCEGCRRPNCNQCDACRVRVGHKPRCIFRTCV). Zn(2+) contacts are provided by Cys186, Cys189, Cys192, Cys197, Cys200, Cys203, Cys213, and Cys218. The interval 230-254 (QATQAGPSRKREKAAPKSRNVQVGP) is disordered. Ser258 is modified (phosphoserine).

In terms of assembly, component of the SET1 complex, composed at least of the catalytic subunit Set1, wds/WDR5, Wdr82, Rbbp5, ash2, Cfp1/CXXC1, hcf and Dpy-30L1.

The protein localises to the nucleus. Functionally, component of the SET1 complex that specifically di- and trimethylates 'Lys-4' of histone H3. Essential for Set1 association with chromatin and trimethylation of histone H3 at 'Lys-4' at transcription puffs. Additionally, is critical for general chromosomal association of Set1. The sequence is that of CXXC-type zinc finger protein 1 (Cfp1) from Drosophila melanogaster (Fruit fly).